Here is a 111-residue protein sequence, read N- to C-terminus: Large ribosomal subunit protein uL22 (111 aa).

It belongs to the universal ribosomal protein uL22 family. In terms of assembly, part of the 50S ribosomal subunit.

Its function is as follows. This protein binds specifically to 23S rRNA; its binding is stimulated by other ribosomal proteins, e.g. L4, L17, and L20. It is important during the early stages of 50S assembly. It makes multiple contacts with different domains of the 23S rRNA in the assembled 50S subunit and ribosome. Functionally, the globular domain of the protein is located near the polypeptide exit tunnel on the outside of the subunit, while an extended beta-hairpin is found that lines the wall of the exit tunnel in the center of the 70S ribosome. In Xylella fastidiosa (strain M23), this protein is Large ribosomal subunit protein uL22.